The following is a 79-amino-acid chain: Metallothionein-like protein type 2 (79 aa).

This sequence belongs to the metallothionein superfamily. Type 15 family.

In terms of biological role, metallothioneins have a high content of cysteine residues that bind various heavy metals. This chain is Metallothionein-like protein type 2 (MT1), found in Malus domestica (Apple).